The primary structure comprises 173 residues: Fimbrial protein PrsE (173 aa).

Residues 1–24 (MKKIRGLCLPVMLGAVLMSQHVHA) form the signal peptide.

The protein localises to the secreted. Its subcellular location is the fimbrium. Functionally, fimbriae (also called pili), polar filaments radiating from the surface of the bacterium to a length of 0.5-1.5 micrometers and numbering 100-300 per cell, enable bacteria to colonize the epithelium of specific host organs. The polypeptide is Fimbrial protein PrsE (prsE) (Escherichia coli).